The primary structure comprises 405 residues: Amino sugar nitrososynthase DnmZ (405 aa).

Residues glutamate 117 and arginine 332 each contribute to the dTDP site.

The protein belongs to the acyl-CoA dehydrogenase family. As to quaternary structure, homotetramer. The cofactor is FAD.

Its pathway is antibiotic biosynthesis. In terms of biological role, nitrososynthase involved in the biosynthesis of baumycin. Catalyzes the double-oxidation of TDP-L-epi-vancosamine to TDP-L-epi-vancosonitrose. The rapid turnover of TDP-L-epi-vancosamine suggests that this compound, or a closely related analog, is the natural substrate for DnmZ. Can also catalyze the double-oxidation of TDP-L-evernosamine to TDP-L-evernitrosose. The sequence is that of Amino sugar nitrososynthase DnmZ from Streptomyces peucetius.